The following is a 561-amino-acid chain: 7-keto 8-aminopelargonic acid transporter (561 aa).

Residues 1–49 are Cytoplasmic-facing; that stretch reads MNRVGAVFLFVYERNFFLSIVPDRHRTEIRMSSSERSEVKFDKHFNWWS. Residues 50-70 traverse the membrane as a helical segment; that stretch reads LLGIAFSLSCSWVGISASMAV. Topologically, residues 71–77 are extracellular; it reads GIASGGP. Residues 78 to 98 traverse the membrane as a helical segment; it reads LLIIYGLIIAAFFSLMCGISL. At 99–160 the chain is on the cytoplasmic side; that stretch reads GDFAAILPNS…NVEVSSKFQK (62 aa). A helical transmembrane segment spans residues 161 to 181; it reads VSSMVVGLLNYFGAIFTTASI. Residues 182–204 are Extracellular-facing; the sequence is CSSLSMSCIGIHKLLHPDYELKH. Residues 205 to 225 form a helical membrane-spanning segment; the sequence is WHVFVGYECINAVLTLFNIYS. At 226 to 230 the chain is on the cytoplasmic side; it reads TPLPY. The helical transmembrane segment at 231–251 threads the bilayer; that stretch reads ISQFGLYTSLLSFAMTFIICI. The Extracellular segment spans residues 252–281; it reads VSRSDNTVDPWPKASNIFGSFDNQTGWNSS. A helical transmembrane segment spans residues 282–302; sequence GMAFVVGLVNPIWAFVGIDSA. Residues 303–321 are Cytoplasmic-facing; that stretch reads THMIDEVGYSKSRFLVPKV. The helical transmembrane segment at 322 to 342 threads the bilayer; it reads IITTIIVGFVTSFIYCVGLFF. Residues 343-369 lie on the Extracellular side of the membrane; the sequence is CITDQTAVVESILPIVEIFYQATGNRN. The helical transmembrane segment at 370 to 390 threads the bilayer; it reads LSVFLQCMCITTGFVSGIASG. Topologically, residues 391–439 are cytoplasmic; the sequence is TWQSRILQSFGKSYAPFYKEGSLGNKSLKKLAVLTPGFKSPLYAHFLSQ. Residues 440-460 form a helical membrane-spanning segment; sequence ICVTIIGCIFMGSSTAFNAII. A topological domain (extracellular) is located at residue Thr461. A helical transmembrane segment spans residues 462–482; the sequence is ACITLLLMSYAVPSFIFLFVI. Over 483-507 the chain is Cytoplasmic; that stretch reads KKEKFIHRIESDVNCVSRPNRRRMS. A helical membrane pass occupies residues 508–528; it reads MIPHIICILWTLFCLVFLSFP. The Extracellular segment spans residues 529 to 540; that stretch reads YTLPVTAGNMNY. A helical transmembrane segment spans residues 541–560; the sequence is TSVVYAVVFCIISIVVFPTC. A topological domain (cytoplasmic) is located at residue Ile561.

Belongs to the amino acid-polyamine-organocation (APC) superfamily.

It localises to the membrane. In terms of biological role, transport into the cell of 7-keto 8-aminopelargonic acid. This chain is 7-keto 8-aminopelargonic acid transporter (BIO5), found in Saccharomyces cerevisiae (strain ATCC 204508 / S288c) (Baker's yeast).